A 134-amino-acid polypeptide reads, in one-letter code: Lymphocyte antigen 6 complex locus protein G6d (134 aa).

The first 19 residues, 1–19 (MNSQLIGILFSALLGAALG), serve as a signal peptide directing secretion. The UPAR/Ly6 domain maps to 22–121 (MRCYDCGGGP…ASSSTPLCIL (100 aa)). 5 disulfides stabilise this stretch: Cys-24–Cys-48, Cys-27–Cys-35, Cys-42–Cys-76, Cys-82–Cys-101, and Cys-102–Cys-107. Thr-68 carries O-linked (GalNAc...) threonine glycosylation. Asn-108 carries the GPI-anchor amidated asparagine lipid modification. A propeptide spans 109–134 (GAVASSSTPLCILAAVTTLAWLLSGQ) (removed in mature form).

In terms of assembly, homodimer. O-glycosylated.

It localises to the cell membrane. This chain is Lymphocyte antigen 6 complex locus protein G6d (Ly6g6d), found in Rattus norvegicus (Rat).